The primary structure comprises 571 residues: Sulfite reductase [NADPH] hemoprotein beta-component (571 aa).

Positions 435, 441, 480, and 484 each coordinate [4Fe-4S] cluster. Cys-484 lines the siroheme pocket.

It belongs to the nitrite and sulfite reductase 4Fe-4S domain family. Alpha(8)-beta(8). The alpha component is a flavoprotein, the beta component is a hemoprotein. Requires siroheme as cofactor. The cofactor is [4Fe-4S] cluster.

It carries out the reaction hydrogen sulfide + 3 NADP(+) + 3 H2O = sulfite + 3 NADPH + 4 H(+). Its pathway is sulfur metabolism; hydrogen sulfide biosynthesis; hydrogen sulfide from sulfite (NADPH route): step 1/1. In terms of biological role, component of the sulfite reductase complex that catalyzes the 6-electron reduction of sulfite to sulfide. This is one of several activities required for the biosynthesis of L-cysteine from sulfate. The polypeptide is Sulfite reductase [NADPH] hemoprotein beta-component (Erwinia tasmaniensis (strain DSM 17950 / CFBP 7177 / CIP 109463 / NCPPB 4357 / Et1/99)).